A 292-amino-acid polypeptide reads, in one-letter code: Tissue factor (292 aa).

Positions 1–32 (MAPPTRLQVPRPGTAVPYTVLLGWLLAQVARA) are cleaved as a signal peptide. The Extracellular segment spans residues 33–250 (ADTTGRAYNL…SREQGRAREM (218 aa)). Fibronectin type-III domains are found at residues 35 to 126 (TTGR…PFRN) and 148 to 240 (QVGT…TECT). Asn41 carries an N-linked (GlcNAc...) asparagine glycan. Short sequence motifs (WKS motif) lie at residues 44–46 (WKS) and 75–77 (WKS). Residues Cys79 and Cys87 are joined by a disulfide bond. N-linked (GlcNAc...) asparagine glycosylation is found at Asn114, Asn154, Asn167, and Asn182. Residues Cys216 and Cys239 are joined by a disulfide bond. The chain crosses the membrane as a helical span at residues 251–271 (FFIIGAVVVVALLIIVLSVTV). Over 272–292 (YKCRKARAGPSGKESSPLNIA) the chain is Cytoplasmic. Cys274 carries S-palmitoyl cysteine lipidation.

The protein belongs to the tissue factor family. As to quaternary structure, interacts with HSPE; the interaction, inhibited by heparin, promotes the generation of activated factor X and activates coagulation in the presence of activated factor VII. As to expression, brain, heart.

The protein localises to the membrane. Functionally, initiates blood coagulation by forming a complex with circulating factor VII or VIIa. The [TF:VIIa] complex activates factors IX or X by specific limited proteolysis. TF plays a role in normal hemostasis by initiating the cell-surface assembly and propagation of the coagulation protease cascade. This Oryctolagus cuniculus (Rabbit) protein is Tissue factor (F3).